Reading from the N-terminus, the 271-residue chain is Probable ribosomal RNA small subunit methyltransferase A (271 aa).

Positions 22, 24, 49, 70, 97, and 112 each coordinate S-adenosyl-L-methionine.

Belongs to the class I-like SAM-binding methyltransferase superfamily. rRNA adenine N(6)-methyltransferase family. RsmA subfamily.

The protein resides in the cytoplasm. Specifically dimethylates two adjacent adenosines in the loop of a conserved hairpin near the 3'-end of 16S rRNA in the 30S particle. May play a critical role in biogenesis of 30S subunits. This chain is Probable ribosomal RNA small subunit methyltransferase A, found in Methanosphaera stadtmanae (strain ATCC 43021 / DSM 3091 / JCM 11832 / MCB-3).